The sequence spans 115 residues: Macrophage migration inhibitory factor (115 aa).

Pro2 functions as the Proton acceptor; via imino nitrogen in the catalytic mechanism. Residues Lys33 and Ile65 each contribute to the substrate site. Position 78 is an N6-acetyllysine; alternate (Lys78). Lys78 bears the N6-succinyllysine; alternate mark. Residue Asn98 coordinates substrate.

It belongs to the MIF family. Homotrimer. Interacts with CD74 and CXCR2 extracellular domain and COPS5. Interacts with the USO1 and BNIPL.

The protein localises to the secreted. Its subcellular location is the cytoplasm. It carries out the reaction 3-phenylpyruvate = enol-phenylpyruvate. The catalysed reaction is L-dopachrome = 5,6-dihydroxyindole-2-carboxylate. Its function is as follows. Pro-inflammatory cytokine involved in the innate immune response to bacterial pathogens. The expression of MIF at sites of inflammation suggests a role as mediator in regulating the function of macrophages in host defense. Counteracts the anti-inflammatory activity of glucocorticoids. Has phenylpyruvate tautomerase and dopachrome tautomerase activity (in vitro), but the physiological substrate is not known. It is not clear whether the tautomerase activity has any physiological relevance, and whether it is important for cytokine activity. The polypeptide is Macrophage migration inhibitory factor (Mus musculus (Mouse)).